A 196-amino-acid chain; its full sequence is GTP cyclohydrolase-2 (196 aa).

49-53 provides a ligand contact to GTP; that stretch reads RVHSE. Zn(2+) contacts are provided by cysteine 54, cysteine 65, and cysteine 67. GTP contacts are provided by residues glutamine 70, 92–94, and threonine 114; that span reads EGR. Residue aspartate 126 is the Proton acceptor of the active site. The active-site Nucleophile is the arginine 128. 2 residues coordinate GTP: threonine 149 and lysine 154.

Belongs to the GTP cyclohydrolase II family. As to quaternary structure, homodimer. It depends on Zn(2+) as a cofactor.

The catalysed reaction is GTP + 4 H2O = 2,5-diamino-6-hydroxy-4-(5-phosphoribosylamino)-pyrimidine + formate + 2 phosphate + 3 H(+). Its pathway is cofactor biosynthesis; riboflavin biosynthesis; 5-amino-6-(D-ribitylamino)uracil from GTP: step 1/4. Its function is as follows. Catalyzes the conversion of GTP to 2,5-diamino-6-ribosylamino-4(3H)-pyrimidinone 5'-phosphate (DARP), formate and pyrophosphate. The chain is GTP cyclohydrolase-2 from Citrobacter koseri (strain ATCC BAA-895 / CDC 4225-83 / SGSC4696).